An 87-amino-acid chain; its full sequence is UPF0250 protein ECA1299 (87 aa).

This sequence belongs to the UPF0250 family.

This is UPF0250 protein ECA1299 from Pectobacterium atrosepticum (strain SCRI 1043 / ATCC BAA-672) (Erwinia carotovora subsp. atroseptica).